The primary structure comprises 91 residues: Small ribosomal subunit protein uS19 (91 aa).

This sequence belongs to the universal ribosomal protein uS19 family.

Protein S19 forms a complex with S13 that binds strongly to the 16S ribosomal RNA. In Actinobacillus pleuropneumoniae serotype 7 (strain AP76), this protein is Small ribosomal subunit protein uS19.